Consider the following 125-residue polypeptide: uncharacterized protein (125 aa).

The helical transmembrane segment at 21-43 (KFSLIALVSFTALAIIVLYHNIS) threads the bilayer.

It localises to the membrane. This is an uncharacterized protein from Archaeoglobus fulgidus (strain ATCC 49558 / DSM 4304 / JCM 9628 / NBRC 100126 / VC-16).